The following is a 676-amino-acid chain: Urocanate hydratase (676 aa).

Residues 15 to 35 form a disordered region; it reads PLPENRGRQAGVPHAPVRTPS. NAD(+) is bound by residues 126-127, glutamine 204, 251-253, glutamate 271, 317-318, 343-347, 354-355, tyrosine 403, and glycine 594; these read GG, GMS, NV, QTSCH, and YY.

The protein belongs to the urocanase family. The cofactor is NAD(+).

The enzyme catalyses 4-imidazolone-5-propanoate = trans-urocanate + H2O. It functions in the pathway amino-acid degradation; L-histidine degradation into L-glutamate; N-formimidoyl-L-glutamate from L-histidine: step 2/3. This chain is Urocanate hydratase (UROC1), found in Homo sapiens (Human).